We begin with the raw amino-acid sequence, 236 residues long: Putative glutamine amidotransferase-like protein YvdE (236 aa).

The Glutamine amidotransferase type-1 domain occupies serine 17 to isoleucine 236.

This chain is Putative glutamine amidotransferase-like protein YvdE (yvdE), found in Lactococcus lactis subsp. lactis (strain IL1403) (Streptococcus lactis).